The following is a 15281-amino-acid chain: Cyclosporin synthetase simA (15281 aa).

Residues serine 34–threonine 463 form a condensation 1 region. Positions serine 513–valine 918 are adenylation 1. The Carrier 1 domain occupies alanine 1026–serine 1100. Serine 1060 is modified (O-(pantetheine 4'-phosphoryl)serine). The tract at residues serine 1118–threonine 1549 is condensation 2. Residues serine 1599–valine 2004 form an adenylation 2 region. The interval serine 2067–valine 2251 is methyltransferase (M) domain 1. The Carrier 2 domain maps to alanine 2524–threonine 2598. The residue at position 2558 (serine 2558) is an O-(pantetheine 4'-phosphoryl)serine. Residues serine 2616 to alanine 3044 are condensation 3. The tract at residues serine 3096–valine 3498 is adenylation 3. Residues serine 3562–phenylalanine 3749 form a methyltransferase (M) domain 2 region. In terms of domain architecture, Carrier 3 spans alanine 4011–serine 4085. At serine 4045 the chain carries O-(pantetheine 4'-phosphoryl)serine. Residues valine 4100 to proline 4530 form a condensation 4 region. Positions serine 4582–valine 4986 are adenylation 4. Residues threonine 5052–threonine 5241 are methyltransferase (M) domain 3. One can recognise a Carrier 4 domain in the interval proline 5503 to serine 5577. Serine 5537 bears the O-(pantetheine 4'-phosphoryl)serine mark. Residues valine 5592–proline 6023 are condensation 5. Residues threonine 6075 to valine 6478 form an adenylation 5 region. The methyltransferase (M) domain 4 stretch occupies residues tryptophan 6545 to leucine 6729. The region spanning alanine 7000–serine 7074 is the Carrier 5 domain. An O-(pantetheine 4'-phosphoryl)serine modification is found at serine 7034. The tract at residues serine 7092–serine 7517 is condensation 6. Positions threonine 7572–valine 7976 are adenylation 6. Residues proline 8060–serine 8134 enclose the Carrier 6 domain. At serine 8094 the chain carries O-(pantetheine 4'-phosphoryl)serine. The segment at serine 8152–isoleucine 8582 is condensation 7. The segment at threonine 8633–valine 9038 is adenylation 7. The methyltransferase (M) domain 5 stretch occupies residues proline 9111–aspartate 9288. In terms of domain architecture, Carrier 7 spans alanine 9555–serine 9629. Serine 9589 carries the post-translational modification O-(pantetheine 4'-phosphoryl)serine. The condensation 8 stretch occupies residues serine 9647–threonine 10077. The tract at residues serine 10127–valine 10529 is adenylation 8. The segment at arginine 10588 to leucine 10768 is methyltransferase (M) domain 6. Positions alanine 11052 to serine 11126 constitute a Carrier 8 domain. O-(pantetheine 4'-phosphoryl)serine is present on serine 11086. Residues serine 11144–threonine 11567 form a condensation 9 region. The interval threonine 11616–valine 12019 is adenylation 9. The Carrier 9 domain occupies alanine 12124 to serine 12198. O-(pantetheine 4'-phosphoryl)serine is present on serine 12158. Positions serine 12216–aspartate 12645 are condensation 10. The adenylation 10 stretch occupies residues threonine 12696–valine 13096. The tract at residues tyrosine 13162–aspartate 13343 is methyltransferase (M) domain 7. The Carrier 10 domain occupies alanine 13620–serine 13694. Serine 13654 carries the O-(pantetheine 4'-phosphoryl)serine modification. Residues glutamate 13710 to leucine 14143 form a condensation 11 region. The adenylation 11 stretch occupies residues threonine 14194–valine 14598. The 75-residue stretch at alanine 14695 to glutamine 14769 folds into the Carrier 11 domain. Serine 14729 is modified (O-(pantetheine 4'-phosphoryl)serine). The segment at aspartate 14814–glutamine 15158 is condensation 12. Residues glutamine 15169–valine 15224 form a disordered region. The segment covering alanine 15173–asparagine 15211 has biased composition (low complexity). The segment covering serine 15213 to valine 15224 has biased composition (polar residues).

Belongs to the NRP synthetase family. Requires pantetheine 4'-phosphate as cofactor.

Functionally, nonribosomal peptide synthetase; part of the gene cluster that mediates the biosynthesis of the cycloundecapeptide cyclosporin A (CsA), a compound with antifungal activity used as an immunosuppressant drug. Cyclosporin A contains three non-proteinogenic amino acids: D-alanine, alpha-amino butyric acid and the unusual amino acid (4R)-4-[(E)-2-butenyl]-4-methyl-l-threonine (Bmt). The nonribosomal peptide synthetase (NRPS) catalyzes the elongation and cyclization of the undecapeptide chain. SimA contains 11 modules responsible for sequential uptake of substrates and chain elongation. In addition to the core condensation-adenylation-thiolation (C-A-T) domains present in each module, seven modules contain an additional N-methylation (M) domain (modules 2, 3, 4, 5, 7, 8, and 10). The terminal C domain (C12 or Ct) is implicated in cyclization of the peptidyl chains to form CsA. The first module (A1) takes up D-Ala which is provided by the alanine racemase simB. The A2, A3, A8, and A10 domains have the same substrate-specific signature for recognition of leucine residues. The unusual amino acid (4R)-4-[(E)-2-butenyl]-4-methyl-l-threonine (Bmt) is recognized by the fifth module (A5). The A11 domain recognizes L-Ala. The PKS simG mediates the biosynthesis of 3R-hydroxyl-4R-methyl-6E-octenoic acid from acetyl coenzyme A (acetyl-CoA), malonyl-CoA, and S-adenosylmethionine, and 3R-hydroxyl-4R-methyl-6E-octenoic acid is then be repeatedly oxidized by simI to 3R-hydroxy-4R-methyl-2-keto-6E-octenoic acid. The latter is likely converted to Bmt through the action of the aminotransferase SimJ. The sequence is that of Cyclosporin synthetase simA from Tolypocladium inflatum (Cyclosporin fungus).